A 279-amino-acid chain; its full sequence is Large ribosomal subunit protein uL2 (279 aa).

Disordered regions lie at residues 1–59 (MGIR…GGHK) and 224–279 (VAMN…KNKR). The span at 50 to 59 (TTRHKGGGHK) shows a compositional bias: basic residues. Over residues 253-268 (REGRTRRPNKESDKLI) the composition is skewed to basic and acidic residues. Residues 269–279 (VRRRRTGKNKR) show a composition bias toward basic residues.

This sequence belongs to the universal ribosomal protein uL2 family. Part of the 50S ribosomal subunit. Forms a bridge to the 30S subunit in the 70S ribosome.

In terms of biological role, one of the primary rRNA binding proteins. Required for association of the 30S and 50S subunits to form the 70S ribosome, for tRNA binding and peptide bond formation. It has been suggested to have peptidyltransferase activity; this is somewhat controversial. Makes several contacts with the 16S rRNA in the 70S ribosome. This chain is Large ribosomal subunit protein uL2, found in Pseudarthrobacter chlorophenolicus (strain ATCC 700700 / DSM 12829 / CIP 107037 / JCM 12360 / KCTC 9906 / NCIMB 13794 / A6) (Arthrobacter chlorophenolicus).